The chain runs to 723 residues: MDPKTSAGQCPVMHGANTTAAQSNTAWWPNALNLDILHQHDTKTNPLGEGYRYREAVKQLDVAALKADLTALMTRSQPWWPADWGHYGGLMIRMAWHAAGSYRVADGRGGAGTGNQRFAPLNSWPDNANLDKARRLLWPIKKKYGAKISWADLIVLAGNVAYESMGLKTYGFAFGREDIWHPEKDIYWGSEKAWLAPTGGEGSRYSGQRDLENPLAAVMMGLIYVNPEGVDGQPDPLKTAQDVRVTFARMAMDDEETVALTAGGHTVGKSHGNGSAANLGPAPEGADVHEQGLGWNNHSSRGIGRDTVTSGIEGAWTTHPTQWDNGYFKLLLGYDWELKKSPAGAWQWEPVGIKEDDKPVDVEDPSIRLNPIMTDADMAMKMDPAYRRISERFAADQAYFSEVFARAWFKLTHRDLGPKSRYIGPEIPAEDLLWQDPVPVGPTAYDVGAVKSRIATSGLSVGELVATAWDSARTWRGSDYRGGANGARIRLAPQKDWAGNEPERLARVLAVLEPIAAAAGASVADVIVLAGNVGVELAAKAAGFDVTVPFAPGRGDATQAQTDVESFEVLEPVADGFRNWQQRSFAVQPEEMLLDRAQLMGLSAPEMTVLVGGLRVLGANHGGSKHGVFTDRVGALTNDFFVTLTDMAHAWVPTGRNSYEIRERASGVVKYTATRADLVFGSNSVLRAYAEVYAQDDSREKFVRDFVAAWVKVMNADRYELQG.

Positions W96–Y224 form a cross-link, tryptophyl-tyrosyl-methioninium (Trp-Tyr) (with M-250). The Proton acceptor role is filled by H97. The segment at residues Y224–M250 is a cross-link (tryptophyl-tyrosyl-methioninium (Tyr-Met) (with W-96)). H265 serves as a coordination point for heme b.

Belongs to the peroxidase family. Peroxidase/catalase subfamily. Homodimer or homotetramer. The cofactor is heme b. Formation of the three residue Trp-Tyr-Met cross-link is important for the catalase, but not the peroxidase activity of the enzyme.

It catalyses the reaction H2O2 + AH2 = A + 2 H2O. The catalysed reaction is 2 H2O2 = O2 + 2 H2O. Its function is as follows. Bifunctional enzyme with both catalase and broad-spectrum peroxidase activity. The polypeptide is Catalase-peroxidase (Leptothrix cholodnii (strain ATCC 51168 / LMG 8142 / SP-6) (Leptothrix discophora (strain SP-6))).